We begin with the raw amino-acid sequence, 660 residues long: Bifunctional polymyxin resistance protein ArnA (660 aa).

The formyltransferase ArnAFT stretch occupies residues 1–304 (MKAIVFAYHD…EMGIVTDVRL (304 aa)). The Proton donor; for formyltransferase activity role is filled by H104. Residues R114 and 136-140 (VKRPD) each bind (6R)-10-formyltetrahydrofolate. A dehydrogenase ArnADH region spans residues 314-660 (RRTRVLILGV…RTTVQEGDGA (347 aa)). Residues D347 and 368–369 (DI) each bind NAD(+). Residues A393, Y398, and 432–433 (TS) each bind UDP-alpha-D-glucuronate. The active-site Proton acceptor; for decarboxylase activity is the E434. UDP-alpha-D-glucuronate contacts are provided by residues R460, N492, 526 to 535 (KLMDGGAQKR), and Y613. R619 (proton donor; for decarboxylase activity) is an active-site residue.

In the N-terminal section; belongs to the Fmt family. UDP-L-Ara4N formyltransferase subfamily. It in the C-terminal section; belongs to the NAD(P)-dependent epimerase/dehydratase family. UDP-glucuronic acid decarboxylase subfamily. Homohexamer, formed by a dimer of trimers.

The enzyme catalyses UDP-alpha-D-glucuronate + NAD(+) = UDP-beta-L-threo-pentopyranos-4-ulose + CO2 + NADH. It carries out the reaction UDP-4-amino-4-deoxy-beta-L-arabinose + (6R)-10-formyltetrahydrofolate = UDP-4-deoxy-4-formamido-beta-L-arabinose + (6S)-5,6,7,8-tetrahydrofolate + H(+). It participates in nucleotide-sugar biosynthesis; UDP-4-deoxy-4-formamido-beta-L-arabinose biosynthesis; UDP-4-deoxy-4-formamido-beta-L-arabinose from UDP-alpha-D-glucuronate: step 1/3. Its pathway is nucleotide-sugar biosynthesis; UDP-4-deoxy-4-formamido-beta-L-arabinose biosynthesis; UDP-4-deoxy-4-formamido-beta-L-arabinose from UDP-alpha-D-glucuronate: step 3/3. The protein operates within bacterial outer membrane biogenesis; lipopolysaccharide biosynthesis. In terms of biological role, bifunctional enzyme that catalyzes the oxidative decarboxylation of UDP-glucuronic acid (UDP-GlcUA) to UDP-4-keto-arabinose (UDP-Ara4O) and the addition of a formyl group to UDP-4-amino-4-deoxy-L-arabinose (UDP-L-Ara4N) to form UDP-L-4-formamido-arabinose (UDP-L-Ara4FN). The modified arabinose is attached to lipid A and is required for resistance to polymyxin and cationic antimicrobial peptides. The sequence is that of Bifunctional polymyxin resistance protein ArnA from Serratia proteamaculans (strain 568).